A 326-amino-acid polypeptide reads, in one-letter code: Ras association domain-containing protein 2 (326 aa).

The 89-residue stretch at 176-264 folds into the Ras-associating domain; that stretch reads YNHKTSVFTP…SKVFLMEKDQ (89 aa). An SARAH domain is found at 272-319; the sequence is VAQYIKFEMPVLKSFIQKLQEEEDREVEKLMRKYTVLRLMIRQRLEEI.

As to quaternary structure, interacts directly with activated KRAS in a GTP-dependent manner. Interacts (via SARAH domain) with STK3/MST2 and STK4/MST1. Post-translationally, phosphorylated by STK3/MST2 and STK4/MST1.

It is found in the nucleus. The protein localises to the cytoplasm. The protein resides in the chromosome. Its subcellular location is the centromere. It localises to the kinetochore. Its function is as follows. Potential tumor suppressor. Acts as a KRAS-specific effector protein. May promote apoptosis and cell cycle arrest. Stabilizes STK3/MST2 by protecting it from proteasomal degradation. This chain is Ras association domain-containing protein 2 (Rassf2), found in Mus musculus (Mouse).